A 120-amino-acid chain; its full sequence is Large ribosomal subunit protein bL20 (120 aa).

This sequence belongs to the bacterial ribosomal protein bL20 family.

Functionally, binds directly to 23S ribosomal RNA and is necessary for the in vitro assembly process of the 50S ribosomal subunit. It is not involved in the protein synthesizing functions of that subunit. This is Large ribosomal subunit protein bL20 from Cereibacter sphaeroides (strain ATCC 17029 / ATH 2.4.9) (Rhodobacter sphaeroides).